A 289-amino-acid polypeptide reads, in one-letter code: tRNA (adenine(58)-N(1))-methyltransferase catalytic subunit TRMT61A (289 aa).

At S2 the chain carries N-acetylserine. Residues 20 to 22 (LGH), 35 to 42 (QTQTRHGV), 64 to 65 (GW), 85 to 89 (QILYS), and 110 to 117 (SGTGSGSV) each bind substrate. S-adenosyl-L-methionine-binding positions include L87, 114-116 (SGS), E135, R140, 163-164 (DV), and D181. Residues 180-183 (LDIP) and 205-212 (SFSPCIEQ) contribute to the substrate site. The tract at residues 245 to 272 (LPPPDLGTGTDGPAGSDTSPFRSGTPMK) is disordered. Residues 250–259 (LGTGTDGPAG) show a composition bias toward low complexity. S263 is modified (phosphoserine). A substrate-binding site is contributed by T278.

This sequence belongs to the class I-like SAM-binding methyltransferase superfamily. TRM61 family. In terms of assembly, heterotetramer; composed of two copies of TRMT6 and two copies of TRMT61A.

It is found in the nucleus. The enzyme catalyses adenosine(58) in tRNA + S-adenosyl-L-methionine = N(1)-methyladenosine(58) in tRNA + S-adenosyl-L-homocysteine + H(+). The catalysed reaction is an adenosine in mRNA + S-adenosyl-L-methionine = an N(1)-methyladenosine in mRNA + S-adenosyl-L-homocysteine + H(+). Catalytic subunit of tRNA (adenine-N(1)-)-methyltransferase, which catalyzes the formation of N(1)-methyladenine at position 58 (m1A58) in initiator methionyl-tRNA. Catalytic subunit of mRNA N(1)-methyltransferase complex, which mediates methylation of adenosine residues at the N(1) position of a small subset of mRNAs: N(1) methylation takes place in tRNA T-loop-like structures of mRNAs and is only present at low stoichiometries. This Homo sapiens (Human) protein is tRNA (adenine(58)-N(1))-methyltransferase catalytic subunit TRMT61A (TRMT61A).